A 417-amino-acid chain; its full sequence is MCQRILILGTGITGKSVARFLYQQGHYLIGADNSLESLISVDHLHDRLLMGASEFPENIDLVIRSPGIKPYHPWVEQAVSLKIPVVTDIQVALKTPEFQRYPSFGITGSNGKTTTTLFLTHLLNTLGIPAIAMGNIGLPILDHMGQPGVRVVEISSFQLATQEEHIPALSGSVFLNFSRNHLDYHRNLDAYFDAKLRIQKCLRQDKTFWVWEECSLGNSYQIYSEEIEEILDKGDALKPIYLHDRDNYCAAYALANEVGWVSPEGFLKAIRTFEKPAHRLEYLGKKDGVHYINDSKATTVTAVEKALMAVGKDVIVILGGKDKGGDFPALASVLSQTTKHVIAMGECRQTIADALSEKIPLTLSKDLQEAVSIAQTIAQEGDTVLLSPGCASFDQFQSFKERGAYFKLLIREMQAVR.

108–114 (GSNGKTT) is an ATP binding site.

The protein belongs to the MurCDEF family.

The protein localises to the cytoplasm. The catalysed reaction is UDP-N-acetyl-alpha-D-muramoyl-L-alanine + D-glutamate + ATP = UDP-N-acetyl-alpha-D-muramoyl-L-alanyl-D-glutamate + ADP + phosphate + H(+). It functions in the pathway cell wall biogenesis; peptidoglycan biosynthesis. In terms of biological role, cell wall formation. Catalyzes the addition of glutamate to the nucleotide precursor UDP-N-acetylmuramoyl-L-alanine (UMA). The protein is UDP-N-acetylmuramoylalanine--D-glutamate ligase of Chlamydia pneumoniae (Chlamydophila pneumoniae).